A 770-amino-acid polypeptide reads, in one-letter code: Signal transducer and activator of transcription 3 (770 aa).

N-acetylalanine is present on alanine 2. 2 positions are modified to N6-acetyllysine: lysine 49 and lysine 87. The short motif at 150-162 (DVRKRVQDLEQKM) is the Essential for nuclear import element. The 91-residue stretch at 580–670 (WNEGYIMGFI…DATNILVSPL (91 aa)) folds into the SH2 domain. 3 positions are modified to allysine; alternate: lysine 601, lysine 615, and lysine 631. An N6-acetyllysine; alternate mark is found at lysine 601, lysine 615, and lysine 631. The residue at position 640 (tyrosine 640) is a Phosphotyrosine; by TYK2. At lysine 685 the chain carries Allysine; alternate. Lysine 685 is modified (N6-acetyllysine; alternate). Position 704 is a phosphotyrosine (proline 704). At tyrosine 705 the chain carries Phosphotyrosine; by FER and PTK6. Lysine 707 bears the N6-acetyllysine mark. Threonine 714 bears the Phosphothreonine mark. Residue serine 727 is modified to Phosphoserine; by DYRK2, NLK, NEK6, IRAK1, RPS6KA5, ZIPK/DAPK3 and PKC/PRKCE.

Belongs to the transcription factor STAT family. Forms a homodimer or a heterodimer with a related family member (at least STAT1). Component of a promoter-binding complex composed of STAT3, NFATC3 and NFATC4; complex formation is enhanced by calcineurin. Interacts with IL31RA, NCOA1, PELP1, SIPAR, SOCS7, STATIP1 and TMF1. Interacts with IL23R in presence of IL23. Interacts (via SH2 domain) with NLK. Interacts with ARL2BP; the interaction is enhanced by LIF and JAK1 expression. Interacts with KPNA4 and KPNA5; KPNA4 may be the primary mediator of nuclear import. Interacts with CAV2; the interaction is increased on insulin-induced tyrosine phosphorylation of CAV2 and leads to STAT3 activation. Interacts with ARL2BP; interaction is enhanced with ARL2. Interacts with NEK6. Binds to CDK9 when activated and nuclear. Interacts with BMX. Interacts with ZIPK/DAPK3. Interacts with PIAS3; the interaction occurs on stimulation by IL6, CNTF or OSM and inhibits the DNA binding activity of STAT3. In prostate cancer cells, interacts with PRKCE and promotes DNA binding activity of STAT3. Interacts with STMN3, antagonizing its microtubule-destabilizing activity. Interacts with the 'Lys-129' acetylated form of BIRC5/survivin. Interacts with FER. Interacts (via SH2 domain) with EIF2AK2/PKR (via the kinase catalytic domain). Interacts with INPP5F; the interaction is independent of STAT3 Tyr-705 phosphorylation status. Interacts with FGFR4. Interacts with OCIAD1. Interacts with OCIAD2. Interacts (unphosphorylated or phosphorylated at Ser-727) with PHB1. Interacts and may form heterodimers with NHLH1. Found in a complex with SLC39A6, SLC39A10 and with the 'Ser-727' phosphorylated form of STAT3 throughout mitosis. Interacts (when phosphorylated at Tyr-705) with CD274/PD-L1; promoting nuclear translocation of CD274/PD-L1. Interacts (when acetylated) with EP300 (via bromo domain); interaction takes place following STAT3 acetylation by EP300 and promotes enhanceosome assembly. Interacts (when acetylated) with BRD2 (via bromo domain); interaction promotes STAT3 recruitment to chromatin and T-helper Th17 cell differentiation. Interacts with FAM220A/SIPAR; the interaction occurs in both the nucleus and the cytoplasm, is enhanced by IL6 and promotes STAT3 dephosphorylation. Interacts in both unphosphorylated and phosphorylated forms with FAM220A but interacts preferentially in the phosphorylated form in the nucleus. Interacts with PTPN2; the interaction is promoted by FAM220A and leads to STAT3 dephosphorylation which negatively regulates STAT3 transcriptional activator activity. In terms of assembly, (Microbial infection) Interacts with HCV core protein. As to quaternary structure, (Microbial infection) Interacts with S.typhimurium SarA. (Microbial infection) Interacts with human cytomegalovirus (HHV-5) immediate early protein IE1; this interaction leads to STAT3 nuclear accumulation and disruption of IL6-induced STAT3 phosphorylation. In terms of processing, tyrosine phosphorylated upon stimulation with EGF. Tyrosine phosphorylated in response to constitutively activated FGFR1, FGFR2, FGFR3 and FGFR4. Activated through tyrosine phosphorylation by BMX. Tyrosine phosphorylated in response to IL6, IL11, LIF, CNTF, KITLG/SCF, CSF1, EGF, PDGF, IFN-alpha, LEP and OSM. Activated KIT promotes phosphorylation on tyrosine residues and subsequent translocation to the nucleus. Phosphorylated on serine upon DNA damage, probably by ATM or ATR. Serine phosphorylation is important for the formation of stable DNA-binding STAT3 homodimers and maximal transcriptional activity. ARL2BP may participate in keeping the phosphorylated state of STAT3 within the nucleus. Upon LPS challenge, phosphorylated within the nucleus by IRAK1. Upon erythropoietin treatment, phosphorylated on Ser-727 by RPS6KA5. Dephosphorylation on tyrosine residues by PTPN2 negatively regulates IL6/interleukin-6 signaling. Phosphorylation at Tyr-705 by PTK6, isoform M2 of PKM (PKM2) or FER leads to an increase of its transcriptional activity. Phosphorylation at Tyr-705 is increased in the presence of calcineurin. Phosphorylation at Tyr-640 by TYK2 negatively regulates transcriptional activity. Acetylated on lysine residues by EP300/p300, promoting its activation. Acetylation at Lys-49 and Lys-87 by EP300/p300 promotes its activation. Acetylation at Lys-87 by EP300/p300 promotes its association with BRD2 and recruitment to chromatin. Deacetylated at Lys-49 and Lys-87 by HDAC1. Acetylation at Lys-685 by EP300/p300 promotes its homodimerization and activation. Deacetylated at Lys-685 by HDAC3. Acetylated on lysine residues by CREBBP. Deacetylation by LOXL3 leads to disrupt STAT3 dimerization and inhibit STAT3 transcription activity. Oxidation of lysine residues to allysine on STAT3 preferentially takes place on lysine residues that are acetylated. Post-translationally, some lysine residues are oxidized to allysine by LOXL3, leading to disrupt STAT3 dimerization and inhibit STAT3 transcription activity. Oxidation of lysine residues to allysine on STAT3 preferentially takes place on lysine residues that are acetylated. In terms of processing, (Microbial infection) Phosphorylated on Tyr-705 in the presence of S.typhimurium SarA. In terms of tissue distribution, heart, brain, placenta, lung, liver, skeletal muscle, kidney and pancreas. Expressed in naive CD4(+) T cells as well as T-helper Th17, Th1 and Th2 cells.

The protein resides in the cytoplasm. It localises to the nucleus. Its function is as follows. Signal transducer and transcription activator that mediates cellular responses to interleukins, KITLG/SCF, LEP and other growth factors. Once activated, recruits coactivators, such as NCOA1 or MED1, to the promoter region of the target gene. May mediate cellular responses to activated FGFR1, FGFR2, FGFR3 and FGFR4. Upon activation of IL6ST/gp130 signaling by interleukin-6 (IL6), binds to the IL6-responsive elements identified in the promoters of various acute-phase protein genes. Activated by IL31 through IL31RA. Acts as a regulator of inflammatory response by regulating differentiation of naive CD4(+) T-cells into T-helper Th17 or regulatory T-cells (Treg): acetylation promotes its transcription activity and cell differentiation while deacetylation and oxidation of lysine residues by LOXL3 inhibits differentiation. Involved in cell cycle regulation by inducing the expression of key genes for the progression from G1 to S phase, such as CCND1. Mediates the effects of LEP on melanocortin production, body energy homeostasis and lactation. May play an apoptotic role by transctivating BIRC5 expression under LEP activation. Cytoplasmic STAT3 represses macroautophagy by inhibiting EIF2AK2/PKR activity. Plays a crucial role in basal beta cell functions, such as regulation of insulin secretion. Following JAK/STAT signaling activation and as part of a complex with NFATC3 and NFATC4, binds to the alpha-beta E4 promoter region of CRYAB and activates transcription in cardiomyocytes. The chain is Signal transducer and activator of transcription 3 from Homo sapiens (Human).